Consider the following 435-residue polypeptide: Putative acid phosphatase F26C11.1 (435 aa).

His-38 (nucleophile) is an active-site residue. Catalysis depends on Asp-317, which acts as the Proton donor. Cys-382 and Cys-388 are oxidised to a cystine.

This sequence belongs to the histidine acid phosphatase family.

The catalysed reaction is a phosphate monoester + H2O = an alcohol + phosphate. The sequence is that of Putative acid phosphatase F26C11.1 from Caenorhabditis elegans.